The following is a 243-amino-acid chain: Ubiquinone biosynthesis O-methyltransferase (243 aa).

Arg-45, Gly-65, Asp-86, and Leu-130 together coordinate S-adenosyl-L-methionine.

Belongs to the methyltransferase superfamily. UbiG/COQ3 family.

It catalyses the reaction a 3-demethylubiquinol + S-adenosyl-L-methionine = a ubiquinol + S-adenosyl-L-homocysteine + H(+). The enzyme catalyses a 3-(all-trans-polyprenyl)benzene-1,2-diol + S-adenosyl-L-methionine = a 2-methoxy-6-(all-trans-polyprenyl)phenol + S-adenosyl-L-homocysteine + H(+). Its pathway is cofactor biosynthesis; ubiquinone biosynthesis. Its function is as follows. O-methyltransferase that catalyzes the 2 O-methylation steps in the ubiquinone biosynthetic pathway. This chain is Ubiquinone biosynthesis O-methyltransferase, found in Idiomarina loihiensis (strain ATCC BAA-735 / DSM 15497 / L2-TR).